Here is a 470-residue protein sequence, read N- to C-terminus: Neuraminidase (470 aa).

The Intravirion segment spans residues 1 to 14; it reads MNPNQKIITIGSVS. Residues 11 to 32 form an involved in apical transport and lipid raft association region; that stretch reads GSVSLGLVVLNILLHIVSITIT. A helical transmembrane segment spans residues 15–35; the sequence is LGLVVLNILLHIVSITITVLV. The hypervariable stalk region stretch occupies residues 32–86; that stretch reads TVLVLPGNGNNGSCNETVIREYNETVRIEKIIQWHNTNVIEYIERPESDHFMNNT. The Virion surface segment spans residues 36–470; the sequence is LPGNGNNGSC…AILPFDIDKM (435 aa). 4 N-linked (GlcNAc...) asparagine; by host glycosylation sites follow: Asn42, Asn46, Asn54, and Asn84. Residues 89-470 form a head of neuraminidase region; it reads LCDAKGFAPF…AILPFDIDKM (382 aa). 8 disulfide bridges follow: Cys90-Cys417, Cys122-Cys127, Cys182-Cys229, Cys231-Cys236, Cys277-Cys290, Cys279-Cys288, Cys316-Cys335, and Cys421-Cys446. Arg116 serves as a coordination point for substrate. N-linked (GlcNAc...) asparagine; by host glycosylation is present at Asn144. Asp149 acts as the Proton donor/acceptor in catalysis. Arg150 contributes to the substrate binding site. 275–276 contributes to the substrate binding site; sequence EE. Arg291 contacts substrate. Asp292 is a Ca(2+) binding site. Residue Asn293 is glycosylated (N-linked (GlcNAc...) asparagine; by host). Positions 296 and 322 each coordinate Ca(2+). Arg368 contributes to the substrate binding site. N-linked (GlcNAc...) asparagine; by host glycosylation occurs at Asn398. Tyr402 acts as the Nucleophile in catalysis.

Belongs to the glycosyl hydrolase 34 family. As to quaternary structure, homotetramer. Ca(2+) is required as a cofactor. Post-translationally, N-glycosylated.

It localises to the virion membrane. The protein localises to the host apical cell membrane. It carries out the reaction Hydrolysis of alpha-(2-&gt;3)-, alpha-(2-&gt;6)-, alpha-(2-&gt;8)- glycosidic linkages of terminal sialic acid residues in oligosaccharides, glycoproteins, glycolipids, colominic acid and synthetic substrates.. Its activity is regulated as follows. Inhibited by the neuraminidase inhibitors zanamivir (Relenza) and oseltamivir (Tamiflu). These drugs interfere with the release of progeny virus from infected cells and are effective against all influenza strains. Resistance to neuraminidase inhibitors is quite rare. Functionally, catalyzes the removal of terminal sialic acid residues from viral and cellular glycoconjugates. Cleaves off the terminal sialic acids on the glycosylated HA during virus budding to facilitate virus release. Additionally helps virus spread through the circulation by further removing sialic acids from the cell surface. These cleavages prevent self-aggregation and ensure the efficient spread of the progeny virus from cell to cell. Otherwise, infection would be limited to one round of replication. Described as a receptor-destroying enzyme because it cleaves a terminal sialic acid from the cellular receptors. May facilitate viral invasion of the upper airways by cleaving the sialic acid moieties on the mucin of the airway epithelial cells. Likely to plays a role in the budding process through its association with lipid rafts during intracellular transport. May additionally display a raft-association independent effect on budding. Plays a role in the determination of host range restriction on replication and virulence. Sialidase activity in late endosome/lysosome traffic seems to enhance virus replication. The protein is Neuraminidase of Influenza A virus (strain A/Turkey/Canada/1963 H6N8).